Consider the following 659-residue polypeptide: DNA mismatch repair protein MutL (659 aa).

It belongs to the DNA mismatch repair MutL/HexB family.

This protein is involved in the repair of mismatches in DNA. It is required for dam-dependent methyl-directed DNA mismatch repair. May act as a 'molecular matchmaker', a protein that promotes the formation of a stable complex between two or more DNA-binding proteins in an ATP-dependent manner without itself being part of a final effector complex. This is DNA mismatch repair protein MutL from Ligilactobacillus salivarius (strain UCC118) (Lactobacillus salivarius).